The sequence spans 553 residues: CTP synthase (553 aa).

An amidoligase domain region spans residues 1-270 (MTKYVFVTGG…DRLICEELRL (270 aa)). Ser13 is a CTP binding site. Ser13 contributes to the UTP binding site. ATP is bound by residues 14–19 (SLGKGI) and Asp71. The Mg(2+) site is built by Asp71 and Glu144. CTP-binding positions include 151–153 (DIE), 191–196 (KTKPTQ), and Lys227. Residues 191–196 (KTKPTQ) and Lys227 each bind UTP. Residues 295–547 (TIGMVGKYVD…VQAALACQQT (253 aa)) enclose the Glutamine amidotransferase type-1 domain. Gly356 contacts L-glutamine. The Nucleophile; for glutamine hydrolysis role is filled by Cys383. Residues 384 to 387 (LGMQ), Glu407, and Arg473 contribute to the L-glutamine site. Residues His520 and Glu522 contribute to the active site.

This sequence belongs to the CTP synthase family. In terms of assembly, homotetramer.

The enzyme catalyses UTP + L-glutamine + ATP + H2O = CTP + L-glutamate + ADP + phosphate + 2 H(+). It carries out the reaction L-glutamine + H2O = L-glutamate + NH4(+). The catalysed reaction is UTP + NH4(+) + ATP = CTP + ADP + phosphate + 2 H(+). It functions in the pathway pyrimidine metabolism; CTP biosynthesis via de novo pathway; CTP from UDP: step 2/2. Its activity is regulated as follows. Allosterically activated by GTP, when glutamine is the substrate; GTP has no effect on the reaction when ammonia is the substrate. The allosteric effector GTP functions by stabilizing the protein conformation that binds the tetrahedral intermediate(s) formed during glutamine hydrolysis. Inhibited by the product CTP, via allosteric rather than competitive inhibition. In terms of biological role, catalyzes the ATP-dependent amination of UTP to CTP with either L-glutamine or ammonia as the source of nitrogen. Regulates intracellular CTP levels through interactions with the four ribonucleotide triphosphates. The polypeptide is CTP synthase (Burkholderia mallei (strain NCTC 10247)).